Reading from the N-terminus, the 214-residue chain is MFKDFNFSIYLVTDDAFFVDRDVVRTIEQAIEGGITAVQYRFKNKPSRKMYEELLVLRDITKQNKVALIVNDRVDLAIAVKADGVHVGQEDLPPDVCKKIIPEDMIVGYSVNNLEQLKDAMTMPIDYIGFGSVFHTKTKKDYKYVGLEALCKATNITSIPIIAIGGITHYNLKDVLKCKVKGVAVVSAILGFEDVKRAASDFKQMYKESLSMQI.

4-amino-2-methyl-5-(diphosphooxymethyl)pyrimidine contacts are provided by residues 39-43 (QYRFK) and Asn-71. Residues Asp-72 and Asp-91 each contribute to the Mg(2+) site. Position 110 (Ser-110) interacts with 4-amino-2-methyl-5-(diphosphooxymethyl)pyrimidine. 136–138 (TKT) lines the 2-[(2R,5Z)-2-carboxy-4-methylthiazol-5(2H)-ylidene]ethyl phosphate pocket. Lys-139 is a 4-amino-2-methyl-5-(diphosphooxymethyl)pyrimidine binding site. 2-[(2R,5Z)-2-carboxy-4-methylthiazol-5(2H)-ylidene]ethyl phosphate-binding positions include Gly-166 and 186–187 (VS).

Belongs to the thiamine-phosphate synthase family. It depends on Mg(2+) as a cofactor.

The enzyme catalyses 2-[(2R,5Z)-2-carboxy-4-methylthiazol-5(2H)-ylidene]ethyl phosphate + 4-amino-2-methyl-5-(diphosphooxymethyl)pyrimidine + 2 H(+) = thiamine phosphate + CO2 + diphosphate. It carries out the reaction 2-(2-carboxy-4-methylthiazol-5-yl)ethyl phosphate + 4-amino-2-methyl-5-(diphosphooxymethyl)pyrimidine + 2 H(+) = thiamine phosphate + CO2 + diphosphate. The catalysed reaction is 4-methyl-5-(2-phosphooxyethyl)-thiazole + 4-amino-2-methyl-5-(diphosphooxymethyl)pyrimidine + H(+) = thiamine phosphate + diphosphate. Its pathway is cofactor biosynthesis; thiamine diphosphate biosynthesis; thiamine phosphate from 4-amino-2-methyl-5-diphosphomethylpyrimidine and 4-methyl-5-(2-phosphoethyl)-thiazole: step 1/1. Its function is as follows. Condenses 4-methyl-5-(beta-hydroxyethyl)thiazole monophosphate (THZ-P) and 2-methyl-4-amino-5-hydroxymethyl pyrimidine pyrophosphate (HMP-PP) to form thiamine monophosphate (TMP). The chain is Thiamine-phosphate synthase from Hydrogenobaculum sp. (strain Y04AAS1).